A 624-amino-acid polypeptide reads, in one-letter code: Chromosomal replication initiator protein DnaA (624 aa).

The tract at residues 1 to 99 (MADVPADLAA…SAGEPPSPPA (99 aa)) is domain I, interacts with DnaA modulators. Positions 88–284 (DDSAGEPPSP…APGPGEPHAR (197 aa)) are disordered. The segment at 100 to 283 (PPMHQSHQSQ…PAPGPGEPHA (184 aa)) is domain II. A compositionally biased stretch (low complexity) spans 102 to 112 (MHQSHQSQQGH). Basic and acidic residues-rich tracts occupy residues 118–141 (QRDDAPRGDAYDGYGHRPSDDGMP) and 176–206 (GYQDREQPSGEPYRESESYRERENEQYREQA). The segment covering 250-264 (PRQGGHGPGRTGGSV) has biased composition (gly residues). Residues 284–500 (RLNPKYLFDT…GALIRVTAFA (217 aa)) form a domain III, AAA+ region region. Glycine 328, glycine 330, lysine 331, and threonine 332 together coordinate ATP. The tract at residues 501–624 (SLNRQPVDLG…TELTNRIKNG (124 aa)) is domain IV, binds dsDNA.

Belongs to the DnaA family. In terms of assembly, oligomerizes as a right-handed, spiral filament on DNA at oriC.

The protein resides in the cytoplasm. Its function is as follows. Plays an essential role in the initiation and regulation of chromosomal replication. ATP-DnaA binds to the origin of replication (oriC) to initiate formation of the DNA replication initiation complex once per cell cycle. Binds the DnaA box (a 9 base pair repeat at the origin) and separates the double-stranded (ds)DNA. Forms a right-handed helical filament on oriC DNA; dsDNA binds to the exterior of the filament while single-stranded (ss)DNA is stabiized in the filament's interior. The ATP-DnaA-oriC complex binds and stabilizes one strand of the AT-rich DNA unwinding element (DUE), permitting loading of DNA polymerase. After initiation quickly degrades to an ADP-DnaA complex that is not apt for DNA replication. Binds acidic phospholipids. The DnaA box consensus is 5'-(T/C)(T/C)(G/AC)TCCACA-3'. This chain is Chromosomal replication initiator protein DnaA, found in Streptomyces anulatus (Streptomyces chrysomallus).